Consider the following 340-residue polypeptide: Guanine nucleotide-binding protein G(I)/G(S)/G(T) subunit beta-1 (340 aa).

WD repeat units lie at residues 53 to 83 (GHLA…IIWD), 95 to 125 (LRSS…SIYN), 141 to 170 (GHTG…ALWD), 182 to 212 (GHTG…KLWD), 224 to 254 (GHES…RLFD), 268 to 298 (NIIC…NVWD), and 310 to 340 (GHDN…KIWN).

Belongs to the WD repeat G protein beta family. In terms of assembly, g proteins are composed of 3 units, alpha, beta and gamma.

Guanine nucleotide-binding proteins (G proteins) are involved as a modulator or transducer in various transmembrane signaling systems. The beta and gamma chains are required for the GTPase activity, for replacement of GDP by GTP, and for G protein-effector interaction. This Danio rerio (Zebrafish) protein is Guanine nucleotide-binding protein G(I)/G(S)/G(T) subunit beta-1 (gnb1).